The primary structure comprises 149 residues: MRCPYCSYEESKVVDSRSAEDYNAIRRRRECLRCSKRYTTYEKVEDIPILVIKKDLSRESFNKEKIISGLIKACQKRPVSRAQIEEIAADIERNISNKMMVEIKSDYIGEMIMERLKDIDEVSYVRFASVYRQFKDINTFMEEIKSLMK.

A zinc finger lies at 3-34 (CPYCSYEESKVVDSRSAEDYNAIRRRRECLRC). The ATP-cone domain maps to 49–139 (ILVIKKDLSR…VYRQFKDINT (91 aa)).

The protein belongs to the NrdR family. Zn(2+) is required as a cofactor.

In terms of biological role, negatively regulates transcription of bacterial ribonucleotide reductase nrd genes and operons by binding to NrdR-boxes. This is Transcriptional repressor NrdR from Clostridium perfringens (strain ATCC 13124 / DSM 756 / JCM 1290 / NCIMB 6125 / NCTC 8237 / Type A).